The primary structure comprises 755 residues: 1,4-alpha-glucan branching enzyme GlgB (755 aa).

D431 functions as the Nucleophile in the catalytic mechanism. E484 serves as the catalytic Proton donor.

The protein belongs to the glycosyl hydrolase 13 family. GlgB subfamily. In terms of assembly, monomer.

It carries out the reaction Transfers a segment of a (1-&gt;4)-alpha-D-glucan chain to a primary hydroxy group in a similar glucan chain.. It functions in the pathway glycan biosynthesis; glycogen biosynthesis. In terms of biological role, catalyzes the formation of the alpha-1,6-glucosidic linkages in glycogen by scission of a 1,4-alpha-linked oligosaccharide from growing alpha-1,4-glucan chains and the subsequent attachment of the oligosaccharide to the alpha-1,6 position. The sequence is that of 1,4-alpha-glucan branching enzyme GlgB from Prochlorococcus marinus (strain NATL2A).